The following is a 412-amino-acid chain: FAD-dependent monooxygenase nscC (412 aa).

An N-terminal signal peptide occupies residues 1–21; it reads MAKPQATVLIIGAGISGLTTS. FAD-binding residues include Glu35 and Ala46. A glycan (N-linked (GlcNAc...) asparagine) is linked at Asn92. Arg119 contributes to the FAD binding site. Residues Asn170 and Asn231 are each glycosylated (N-linked (GlcNAc...) asparagine). FAD contacts are provided by Asp326 and Gly339.

The protein belongs to the paxM FAD-dependent monooxygenase family. The cofactor is FAD.

It functions in the pathway secondary metabolite biosynthesis. In terms of biological role, FAD-dependent monooxygenase; part of the gene cluster that mediates the biosynthesis of neosartoricin B, a prenylated anthracenone that probably exhibits T-cell antiproliferative activity, suggestive of a physiological role as an immunosuppressive agent. The non-reducing polyketide synthase nscA probably synthesizes and cyclizes the decaketide backbone. The hydrolase nscB then mediates the product release through hydrolysis followed by spontaneous decarboxylation. The prenyltransferase nscD catalyzes the addition of the dimethylallyl group to the aromatic C5. The FAD-dependent monooxygenase nscC is then responsible for the stereospecific hydroxylation at C2. Neosartoricin B can be converted into two additional compounds neosartoricins C and D. Neosartoricin C is a spirocyclic compound that is cyclized through the attack of C3 hydroxyl on C14, followed by dehydration. On the other hand, neosartoricin D is a further cyclized compound in which attack of C2 on C14 in neosartoricin C results in the formation of the acetal-containing dioxabicyclo-octanone ring. Both of these compounds are novel and possibly represent related metabolites of the gene cluster. The polypeptide is FAD-dependent monooxygenase nscC (Arthroderma otae (strain ATCC MYA-4605 / CBS 113480) (Microsporum canis)).